A 306-amino-acid chain; its full sequence is Nucleotide-binding protein MUL_1815 (306 aa).

Residue 29 to 36 (GLSGAGRG) coordinates ATP. 80–83 (DVRS) provides a ligand contact to GTP.

This sequence belongs to the RapZ-like family.

Functionally, displays ATPase and GTPase activities. This is Nucleotide-binding protein MUL_1815 from Mycobacterium ulcerans (strain Agy99).